Consider the following 989-residue polypeptide: ATP-dependent 6-phosphofructokinase subunit alpha (989 aa).

Positions 1–585 are N-terminal catalytic PFK domain 1; the sequence is MPEPSISDLS…SYENFLSVSK (585 aa). Residues G220, 283 to 284, and 313 to 316 contribute to the ATP site; these read RC and GDGS. D314 contacts Mg(2+). Residues 359-361, R396, 403-405, E460, R487, and 493-496 contribute to the beta-D-fructose 6-phosphate site; these read SID, MGR, and HVQR. D361 serves as the catalytic Proton acceptor. The tract at residues 586 to 599 is interdomain linker; it reads YDDGSYLVPESSRL. Positions 600–989 are C-terminal regulatory PFK domain 2; sequence NIAIIHVGAP…LSGRLSIRTT (390 aa). Residues R670, 727-731, R765, 772-774, E832, R858, 864-867, and R963 contribute to the beta-D-fructose 2,6-bisphosphate site; these read TVSNN, QGG, and HVQQ.

Belongs to the phosphofructokinase type A (PFKA) family. ATP-dependent PFK group I subfamily. Eukaryotic two domain clade 'E' sub-subfamily. As to quaternary structure, heterododecamer of 4 alpha, 4 beta and 4 gamma chains. Mg(2+) is required as a cofactor.

The protein localises to the cytoplasm. The enzyme catalyses beta-D-fructose 6-phosphate + ATP = beta-D-fructose 1,6-bisphosphate + ADP + H(+). Its pathway is carbohydrate degradation; glycolysis; D-glyceraldehyde 3-phosphate and glycerone phosphate from D-glucose: step 3/4. Allosterically activated by ADP, AMP, or fructose 2,6-bisphosphate, and allosterically inhibited by ATP or citrate. Catalyzes the phosphorylation of D-fructose 6-phosphate to fructose 1,6-bisphosphate by ATP, the first committing step of glycolysis. The protein is ATP-dependent 6-phosphofructokinase subunit alpha (PFK1) of Komagataella pastoris (Yeast).